Consider the following 120-residue polypeptide: Chemokine vCXCL1 (120 aa).

This sequence belongs to the intercrine alpha (chemokine CxC) family. Interacts with host CXCR1 and CXCR2.

Its function is as follows. Acts as a functional chemokine, inducing calcium mobilization, chemotaxis, and degranulation of neutrophils. Contributes to the induction of neutrophil chemotaxis by interacting with host CXCR1 and CXCR2 receptors. The polypeptide is Chemokine vCXCL1 (UL146) (Human cytomegalovirus (strain Merlin) (HHV-5)).